An 87-amino-acid chain; its full sequence is MDKAKKQELIATYSRKEGDTGSPEVQIALLSERINHLTSHLKEHKKDHHSRRGLFMMIGKRRSLLNYLESVDIERYRDIIKKLGLRK.

The protein belongs to the universal ribosomal protein uS15 family. As to quaternary structure, part of the 30S ribosomal subunit. Forms a bridge to the 50S subunit in the 70S ribosome, contacting the 23S rRNA.

Functionally, one of the primary rRNA binding proteins, it binds directly to 16S rRNA where it helps nucleate assembly of the platform of the 30S subunit by binding and bridging several RNA helices of the 16S rRNA. Its function is as follows. Forms an intersubunit bridge (bridge B4) with the 23S rRNA of the 50S subunit in the ribosome. The chain is Small ribosomal subunit protein uS15 from Clostridium acetobutylicum (strain ATCC 824 / DSM 792 / JCM 1419 / IAM 19013 / LMG 5710 / NBRC 13948 / NRRL B-527 / VKM B-1787 / 2291 / W).